Reading from the N-terminus, the 115-residue chain is NADH-ubiquinone oxidoreductase chain 3 (115 aa).

Helical transmembrane passes span phenylalanine 3–tryptophan 23, phenylalanine 55–leucine 75, and leucine 84–tyrosine 104.

This sequence belongs to the complex I subunit 3 family. As to quaternary structure, core subunit of respiratory chain NADH dehydrogenase (Complex I) which is composed of 45 different subunits. Interacts with TMEM186. Interacts with TMEM242.

It is found in the mitochondrion inner membrane. The enzyme catalyses a ubiquinone + NADH + 5 H(+)(in) = a ubiquinol + NAD(+) + 4 H(+)(out). Core subunit of the mitochondrial membrane respiratory chain NADH dehydrogenase (Complex I) which catalyzes electron transfer from NADH through the respiratory chain, using ubiquinone as an electron acceptor. Essential for the catalytic activity of complex I. The polypeptide is NADH-ubiquinone oxidoreductase chain 3 (Homo sapiens (Human)).